A 216-amino-acid chain; its full sequence is Ras-related protein RABA1c (216 aa).

20–27 (GDSGVGKS) serves as a coordination point for GTP. Positions 42–50 (SKSTIGVEF) match the Effector region motif. Residues 68–72 (DTAGQ), 126–129 (NKSD), and 156–157 (SA) each bind GTP. S-geranylgeranyl cysteine attachment occurs at residues Cys-213 and Cys-214.

The protein belongs to the small GTPase superfamily. Rab family.

Its subcellular location is the cell membrane. Its function is as follows. Intracellular vesicle trafficking and protein transport. This Arabidopsis thaliana (Mouse-ear cress) protein is Ras-related protein RABA1c (RABA1C).